The sequence spans 564 residues: Mercuric reductase (564 aa).

The HMA domain occupies 1-65; the sequence is MSTLKITGMT…AVAGLGYRAT (65 aa). Residues Cys-11 and Cys-14 each contribute to the a metal cation site. FAD contacts are provided by Ala-109, Gly-129, and Thr-134. A disulfide bridge links Cys-135 with Cys-140. FAD contacts are provided by Lys-144, Ala-210, Asp-406, and Val-414. Hg(2+)-binding residues include Cys-561 and Cys-562.

This sequence belongs to the class-I pyridine nucleotide-disulfide oxidoreductase family. As to quaternary structure, homodimer. The cofactor is FAD.

The enzyme catalyses Hg + NADP(+) + H(+) = Hg(2+) + NADPH. Functionally, resistance to Hg(2+) in bacteria appears to be governed by a specialized system which includes mercuric reductase. MerA protein is responsible for volatilizing mercury as Hg(0). This is Mercuric reductase (merA) from Shigella flexneri.